The following is an 88-amino-acid chain: MASSKFVLFAILALSLLLSGTEARKTVWPSSELDPKCCSNQPEFGICDSKEDDERCAQMCLDGCPTNKGGGCQPITEAPGAVCSCYCA.

The first 23 residues, 1–23 (MASSKFVLFAILALSLLLSGTEA), serve as a signal peptide directing secretion. 4 disulfides stabilise this stretch: Cys-37/Cys-87, Cys-47/Cys-72, Cys-56/Cys-83, and Cys-60/Cys-85.

It belongs to the DEFL family.

It localises to the secreted. The chain is Defensin-like protein 24 from Arabidopsis thaliana (Mouse-ear cress).